The chain runs to 481 residues: GTPase Obg (481 aa).

Residues 2-159 (TTFVDRVVLH…IDVVLELKSV (158 aa)) enclose the Obg domain. The OBG-type G domain maps to 160–330 (ADVGLVGYPS…LMYAMGELVT (171 aa)). GTP is bound by residues 166 to 173 (GYPSAGKS), 191 to 195 (FTTLV), 212 to 215 (DVPG), 282 to 285 (NKVD), and 311 to 313 (SAA). Positions 173 and 193 each coordinate Mg(2+). One can recognise an OCT domain in the interval 348–426 (PKAVDDAGFT…IGEREFDWQP (79 aa)). Positions 439–452 (GDQRLAEKSERPSA) are enriched in basic and acidic residues. Residues 439-481 (GDQRLAEKSERPSATERLAARKARRQRPEDEAEADEPVGDGEE) are disordered. The span at 468 to 481 (DEAEADEPVGDGEE) shows a compositional bias: acidic residues.

Belongs to the TRAFAC class OBG-HflX-like GTPase superfamily. OBG GTPase family. In terms of assembly, monomer. The cofactor is Mg(2+).

It localises to the cytoplasm. Functionally, an essential GTPase which binds GTP, GDP and possibly (p)ppGpp with moderate affinity, with high nucleotide exchange rates and a fairly low GTP hydrolysis rate. Plays a role in control of the cell cycle, stress response, ribosome biogenesis and in those bacteria that undergo differentiation, in morphogenesis control. The chain is GTPase Obg from Salinispora tropica (strain ATCC BAA-916 / DSM 44818 / JCM 13857 / NBRC 105044 / CNB-440).